The sequence spans 218 residues: Glutathione S-transferase Mu 5 (218 aa).

The GST N-terminal domain maps to Pro-2 to Gly-88. Residues Tyr-7–Trp-8, Trp-46–Lys-50, Asn-59–Leu-60, and Gln-72–Ser-73 contribute to the glutathione site. In terms of domain architecture, GST C-terminal spans Thr-90–Leu-207. Position 116 (Tyr-116) interacts with substrate.

Belongs to the GST superfamily. Mu family. As to quaternary structure, homodimer.

It is found in the cytoplasm. The enzyme catalyses RX + glutathione = an S-substituted glutathione + a halide anion + H(+). In terms of biological role, conjugation of reduced glutathione to a wide number of exogenous and endogenous hydrophobic electrophiles. This is Glutathione S-transferase Mu 5 (GSTM5) from Homo sapiens (Human).